A 1557-amino-acid polypeptide reads, in one-letter code: Probable kinase PglW (1557 aa).

Residues 12-130 (SEFEHERRGL…VAEAVCFTDN (119 aa)) enclose the NERD domain. Protein kinase domains are found at residues 195-490 (ELER…LEVV) and 530-816 (WEVR…KVFL). ATP contacts are provided by residues 536-544 (LGTGSTSRA) and Lys564. Disordered stretches follow at residues 615–634 (DERDDDGPGAEGATRPRRRE) and 821–861 (TVPS…QRDR). Positions 830-849 (PAAPADGAAPAEGAAAGIAD) are enriched in low complexity.

It belongs to the protein kinase superfamily. Ser/Thr protein kinase family.

In terms of biological role, BREX systems (bacteriophage exclusion) provide immunity against bacteriophage. Part of a type 2 BREX system. Previously called the phage growth limitation (Pgl) system, it confers protection against bacteriophage phiC31. The bacteria allows one cycle of phage infection, but subsequent cycles are impaired, protecting the original bacterial colony. The system undergoes high rates (10(-3) to 10(-4)) of phase reversion, i.e. loss and regain of phiC31 resistance. When the pglW-pglX-pglY-pglZ genes are transformed into a susceptible S.lividans (strain 1326) they confer resistance to infection by phage phiC31 and phiBT1; all 4 genes are necessary. The proteins has kinase domains and might bind DNA. Autophosphorylates when synthesized in vitro, cannot be expressed in E.coli. The sequence is that of Probable kinase PglW from Streptomyces coelicolor (strain ATCC BAA-471 / A3(2) / M145).